Here is a 660-residue protein sequence, read N- to C-terminus: Cullin-associated NEDD8-dissociated protein 1 homolog (660 aa).

Residue Lys16 forms a Glycyl lysine isopeptide (Lys-Gly) (interchain with G-Cter in NEDD8) linkage. A disordered region spans residues 339-364 (TQNENDHGSDNLIDSDDGFGSDNDPE). Residues 351-363 (IDSDDGFGSDNDP) show a composition bias toward acidic residues.

In terms of assembly, interacts with unneddylated cullin CDC53. Neddylated at Lys-16.

Assembly factor of SCF (SKP1-CUL1-F-box protein) E3 ubiquitin ligase complexes that promotes the exchange of the substrate-recognition F-box subunit in SCF complexes, thereby playing a key role in the cellular repertoire of SCF complexes. Acts as a F-box protein exchange factor. Involved in the aging process. Longevity-assurance protein. In Saccharomyces cerevisiae (strain ATCC 204508 / S288c) (Baker's yeast), this protein is Cullin-associated NEDD8-dissociated protein 1 homolog (LAG2).